Consider the following 411-residue polypeptide: D-ribitol-5-phosphate cytidylyltransferase (411 aa).

This sequence belongs to the IspD/TarI cytidylyltransferase family. IspD subfamily. As to quaternary structure, homodimer.

It is found in the cytoplasm. Its subcellular location is the cytosol. It catalyses the reaction D-ribitol 5-phosphate + CTP + H(+) = CDP-L-ribitol + diphosphate. The enzyme catalyses D-ribose 5-phosphate + CTP + H(+) = CDP-D-ribose + diphosphate. It carries out the reaction D-ribulose 5-phosphate + CTP + H(+) = CDP-D-ribulose + diphosphate. Its pathway is protein modification; protein glycosylation. Cytidylyltransferase required for protein O-linked mannosylation. Catalyzes the formation of CDP-ribitol nucleotide sugar from D-ribitol 5-phosphate. CDP-ribitol is a substrate of FKTN during the biosynthesis of the phosphorylated O-mannosyl trisaccharide (N-acetylgalactosamine-beta-3-N-acetylglucosamine-beta-4-(phosphate-6-)mannose), a carbohydrate structure present in alpha-dystroglycan (DAG1), which is required for binding laminin G-like domain-containing extracellular proteins with high affinity. Shows activity toward other pentose phosphate sugars and mediates formation of CDP-ribulose or CDP-ribose using CTP and ribulose-5-phosphate or ribose-5-phosphate, respectively. Not involved in dolichol production. The protein is D-ribitol-5-phosphate cytidylyltransferase (crppa) of Xenopus tropicalis (Western clawed frog).